The primary structure comprises 317 residues: Pectinesterase 31 (317 aa).

The substrate site is built by Thr91 and Gln121. The active-site Proton donor is Asp144. The active-site Nucleophile is the Asp165. The substrate site is built by Arg222 and Trp224.

The protein belongs to the pectinesterase family. In terms of tissue distribution, expressed in siliques.

The enzyme catalyses [(1-&gt;4)-alpha-D-galacturonosyl methyl ester](n) + n H2O = [(1-&gt;4)-alpha-D-galacturonosyl](n) + n methanol + n H(+). It participates in glycan metabolism; pectin degradation; 2-dehydro-3-deoxy-D-gluconate from pectin: step 1/5. Its activity is regulated as follows. Does not require salt for activity. Not inhibited by kiwi pectin methylesterase inhibitor (PMEI). Functionally, acts in the modification of cell walls via demethylesterification of cell wall pectin. Acts in a blockwise manner, resulting in a cell wall rigidification. The sequence is that of Pectinesterase 31 (PME31) from Arabidopsis thaliana (Mouse-ear cress).